The following is a 102-amino-acid chain: Large ribosomal subunit protein bL21 (102 aa).

This sequence belongs to the bacterial ribosomal protein bL21 family. In terms of assembly, part of the 50S ribosomal subunit. Contacts protein L20.

Functionally, this protein binds to 23S rRNA in the presence of protein L20. The chain is Large ribosomal subunit protein bL21 from Listeria monocytogenes serotype 4b (strain CLIP80459).